Consider the following 224-residue polypeptide: Putative O-methyltransferase MT1258 (224 aa).

Residues 1 to 10 (MDGTPGHDDM) show a composition bias toward basic and acidic residues. The segment at 1-21 (MDGTPGHDDMPGQPAPSRGES) is disordered. S-adenosyl-L-methionine contacts are provided by residues V51, E73, 75–76 (GT), S81, D99, and I100. Residue D147 participates in substrate binding. D149 is an S-adenosyl-L-methionine binding site.

It belongs to the class I-like SAM-binding methyltransferase superfamily. Cation-dependent O-methyltransferase family.

This is Putative O-methyltransferase MT1258 from Mycobacterium tuberculosis (strain CDC 1551 / Oshkosh).